The sequence spans 239 residues: Ribonuclease P protein component 3 (239 aa).

This sequence belongs to the eukaryotic/archaeal RNase P protein component 3 family. As to quaternary structure, consists of a catalytic RNA component and at least 4-5 protein subunits.

It localises to the cytoplasm. It carries out the reaction Endonucleolytic cleavage of RNA, removing 5'-extranucleotides from tRNA precursor.. In terms of biological role, part of ribonuclease P, a protein complex that generates mature tRNA molecules by cleaving their 5'-ends. This Methanosarcina mazei (strain ATCC BAA-159 / DSM 3647 / Goe1 / Go1 / JCM 11833 / OCM 88) (Methanosarcina frisia) protein is Ribonuclease P protein component 3.